We begin with the raw amino-acid sequence, 166 residues long: MSKPLCSTGLRWLWLVVVVLIIDLGSKYLILQNFALGDTVGLFPSLNLHYARNYGAAFSFLADSGGWQRWFFAGIAIGICVILLVMMYRSKATQKLNNIAYALIIGGALGNLFDRLWHGFVVDMIDFYVGDWHFATFNLADSAICIGAALIVLEGFLPKPTAKEQA.

The next 3 membrane-spanning stretches (helical) occupy residues 12–32 (WLWL…LILQ), 70–90 (WFFA…MYRS), and 102–122 (ALII…GFVV). Catalysis depends on residues D123 and D141. Residues 137 to 157 (FNLADSAICIGAALIVLEGFL) form a helical membrane-spanning segment.

It belongs to the peptidase A8 family.

It is found in the cell inner membrane. The catalysed reaction is Release of signal peptides from bacterial membrane prolipoproteins. Hydrolyzes -Xaa-Yaa-Zaa-|-(S,diacylglyceryl)Cys-, in which Xaa is hydrophobic (preferably Leu), and Yaa (Ala or Ser) and Zaa (Gly or Ala) have small, neutral side chains.. Its pathway is protein modification; lipoprotein biosynthesis (signal peptide cleavage). Functionally, this protein specifically catalyzes the removal of signal peptides from prolipoproteins. This is Lipoprotein signal peptidase from Salmonella agona (strain SL483).